The following is a 1324-amino-acid chain: Mediator of RNA polymerase II transcription subunit 13 (1324 aa).

6 disordered regions span residues 296–346 (ESGV…PPEA), 386–455 (FFDD…ATTA), 535–590 (GRFF…EPEI), 607–631 (HDDK…SNNS), 694–816 (KGGQ…VPSA), and 1151–1198 (TGSD…PDIY). Positions 298-331 (GVNTNESTAAQPQPAQNGTNSMAPAAGTTNATTQ) are enriched in polar residues. Positions 398–407 (DGDNDNGNDN) are enriched in acidic residues. Over residues 408–442 (DNDKADAMDVDVKEEAKKEEMIKKETKEEVPVKEE) the composition is skewed to basic and acidic residues. The span at 546–566 (DNEGSSDNTGDSSDSGDGSES) shows a compositional bias: low complexity. Basic and acidic residues-rich tracts occupy residues 567 to 578 (VPRDVKRQKVDE) and 607 to 617 (HDDKPAKKIDS). Composition is skewed to low complexity over residues 618-631 (SNDT…SNNS) and 724-743 (SNAS…QMGA). Over residues 750–784 (LSPSRGATPQPEGSSPETRPSNWTPGITSQVNSAA) the composition is skewed to polar residues. Composition is skewed to low complexity over residues 785 to 816 (SSPV…VPSA) and 1172 to 1184 (TGAA…GSAP).

The protein belongs to the Mediator complex subunit 13 family. As to quaternary structure, component of the SRB8-11 complex, which itself associates with the Mediator complex.

The protein resides in the nucleus. In terms of biological role, component of the SRB8-11 complex. The SRB8-11 complex is a regulatory module of the Mediator complex which is itself involved in regulation of basal and activated RNA polymerase II-dependent transcription. The SRB8-11 complex may be involved in the transcriptional repression of a subset of genes regulated by Mediator. It may inhibit the association of the Mediator complex with RNA polymerase II to form the holoenzyme complex. The polypeptide is Mediator of RNA polymerase II transcription subunit 13 (SSN2) (Yarrowia lipolytica (strain CLIB 122 / E 150) (Yeast)).